Consider the following 127-residue polypeptide: Large ribosomal subunit protein bL19 (127 aa).

This sequence belongs to the bacterial ribosomal protein bL19 family.

Functionally, this protein is located at the 30S-50S ribosomal subunit interface and may play a role in the structure and function of the aminoacyl-tRNA binding site. In Paraburkholderia phymatum (strain DSM 17167 / CIP 108236 / LMG 21445 / STM815) (Burkholderia phymatum), this protein is Large ribosomal subunit protein bL19.